The following is an 85-amino-acid chain: Sec-independent protein translocase protein TatA (85 aa).

The helical transmembrane segment at 1 to 21 (MGGISIWQLLIIALIVVLLFG) threads the bilayer. The interval 43 to 85 (MSSDEDKKALEDAEAAKSVQTAQTAQPTQQATEKKPESNKEQA) is disordered. A compositionally biased stretch (basic and acidic residues) spans 46–57 (DEDKKALEDAEA). Positions 58–73 (AKSVQTAQTAQPTQQA) are enriched in low complexity. The segment covering 74 to 85 (TEKKPESNKEQA) has biased composition (basic and acidic residues).

Belongs to the TatA/E family. In terms of assembly, the Tat system comprises two distinct complexes: a TatABC complex, containing multiple copies of TatA, TatB and TatC subunits, and a separate TatA complex, containing only TatA subunits. Substrates initially bind to the TatABC complex, which probably triggers association of the separate TatA complex to form the active translocon.

The protein resides in the cell inner membrane. Functionally, part of the twin-arginine translocation (Tat) system that transports large folded proteins containing a characteristic twin-arginine motif in their signal peptide across membranes. TatA could form the protein-conducting channel of the Tat system. The protein is Sec-independent protein translocase protein TatA of Shewanella sp. (strain ANA-3).